The chain runs to 158 residues: Large ribosomal subunit protein uL23 (158 aa).

The segment at 1–43 (MPPKSSTKAEPKASSAKTQVAKAKSAKKAVVKGTSSKTQRRIR) is disordered. Over residues 12 to 23 (KASSAKTQVAKA) the composition is skewed to low complexity.

This sequence belongs to the universal ribosomal protein uL23 family.

Functionally, this protein binds to a specific region on the 26S rRNA. The sequence is that of Large ribosomal subunit protein uL23 from Puccinia graminis (Black stem rust fungus).